A 214-amino-acid chain; its full sequence is MVRGGIRDTWRLKKWFKVVAPPLFGETVLGTTPADDPDKLIGRVMETTLFDITGDYSYVHVKMYFQVVRVEGDTAYTRFKGHELLRDYIRGLTRRKSSKVTGIFNVWTKDGYGLRVTAMAFTRQRCKTSQKSAIRKVMQEIVEQKARESTLDELIQLMVFSDHEGSLAYLIDESARKIYPLRKVEIAKSKLLWVPGPNGPEKAVVVSPLQLKVT.

The protein belongs to the eukaryotic ribosomal protein eS1 family.

In Aeropyrum pernix (strain ATCC 700893 / DSM 11879 / JCM 9820 / NBRC 100138 / K1), this protein is Small ribosomal subunit protein eS1.